A 1199-amino-acid chain; its full sequence is DNA-directed RNA polymerase subunit beta' (1199 aa).

Residues cysteine 60, cysteine 62, cysteine 75, and cysteine 78 each contribute to the Zn(2+) site. Aspartate 449, aspartate 451, and aspartate 453 together coordinate Mg(2+). 4 residues coordinate Zn(2+): cysteine 818, cysteine 892, cysteine 899, and cysteine 902.

The protein belongs to the RNA polymerase beta' chain family. The RNAP catalytic core consists of 2 alpha, 1 beta, 1 beta' and 1 omega subunit. When a sigma factor is associated with the core the holoenzyme is formed, which can initiate transcription. Mg(2+) serves as cofactor. The cofactor is Zn(2+).

It catalyses the reaction RNA(n) + a ribonucleoside 5'-triphosphate = RNA(n+1) + diphosphate. In terms of biological role, DNA-dependent RNA polymerase catalyzes the transcription of DNA into RNA using the four ribonucleoside triphosphates as substrates. The sequence is that of DNA-directed RNA polymerase subunit beta' from Exiguobacterium sibiricum (strain DSM 17290 / CCUG 55495 / CIP 109462 / JCM 13490 / 255-15).